Reading from the N-terminus, the 211-residue chain is Peptidyl-tRNA hydrolase (211 aa).

Tyr15 contributes to the tRNA binding site. Residue His20 is the Proton acceptor of the active site. The tRNA site is built by Phe66, Asn68, and Asn114. The disordered stretch occupies residues 189 to 211 (TKPPRPKATRPAQAQAAPQAGAD). Over residues 197–211 (TRPAQAQAAPQAGAD) the composition is skewed to low complexity.

It belongs to the PTH family. Monomer.

Its subcellular location is the cytoplasm. It catalyses the reaction an N-acyl-L-alpha-aminoacyl-tRNA + H2O = an N-acyl-L-amino acid + a tRNA + H(+). Its function is as follows. Hydrolyzes ribosome-free peptidyl-tRNAs (with 1 or more amino acids incorporated), which drop off the ribosome during protein synthesis, or as a result of ribosome stalling. In terms of biological role, catalyzes the release of premature peptidyl moieties from peptidyl-tRNA molecules trapped in stalled 50S ribosomal subunits, and thus maintains levels of free tRNAs and 50S ribosomes. The protein is Peptidyl-tRNA hydrolase of Acidovorax ebreus (strain TPSY) (Diaphorobacter sp. (strain TPSY)).